The primary structure comprises 443 residues: Thymidine phosphorylase (443 aa).

It belongs to the thymidine/pyrimidine-nucleoside phosphorylase family. As to quaternary structure, homodimer.

It catalyses the reaction thymidine + phosphate = 2-deoxy-alpha-D-ribose 1-phosphate + thymine. Its pathway is pyrimidine metabolism; dTMP biosynthesis via salvage pathway; dTMP from thymine: step 1/2. Its function is as follows. The enzymes which catalyze the reversible phosphorolysis of pyrimidine nucleosides are involved in the degradation of these compounds and in their utilization as carbon and energy sources, or in the rescue of pyrimidine bases for nucleotide synthesis. The chain is Thymidine phosphorylase from Shewanella loihica (strain ATCC BAA-1088 / PV-4).